Here is a 45-residue protein sequence, read N- to C-terminus: Cytochrome c6 (45 aa).

Heme c is bound by residues C12, C15, and H16.

The protein belongs to the cytochrome c family. PetJ subfamily. Monomer. In terms of processing, binds 1 heme c group covalently per subunit.

The protein localises to the cellular thylakoid lumen. Functions as an electron carrier between membrane-bound cytochrome b6-f and photosystem I in oxygenic photosynthesis. This chain is Cytochrome c6 (petJ), found in Prochlorothrix hollandica.